A 542-amino-acid chain; its full sequence is Mitogen-activated protein kinase 14 (542 aa).

Positions 13 to 304 (YKIEEVIGKG…AEEALADPYF (292 aa)) constitute a Protein kinase domain. Residues 19-27 (IGKGSYGVV) and Lys42 contribute to the ATP site. The active-site Proton acceptor is Asp139. Thr175 is subject to Phosphothreonine. Residues 175-177 (TDY) carry the TXY motif. The residue at position 177 (Tyr177) is a Phosphotyrosine. Disordered stretches follow at residues 388 to 412 (STAA…DNRP) and 482 to 542 (RNPA…SGHW). The span at 488–507 (PNSSVPLGSSYPRRNQTCKS) shows a compositional bias: polar residues.

This sequence belongs to the protein kinase superfamily. CMGC Ser/Thr protein kinase family. MAP kinase subfamily. Post-translationally, dually phosphorylated on Thr-175 and Tyr-177, which activates the enzyme.

The enzyme catalyses L-seryl-[protein] + ATP = O-phospho-L-seryl-[protein] + ADP + H(+). It catalyses the reaction L-threonyl-[protein] + ATP = O-phospho-L-threonyl-[protein] + ADP + H(+). With respect to regulation, activated by threonine and tyrosine phosphorylation. The polypeptide is Mitogen-activated protein kinase 14 (MPK14) (Oryza sativa subsp. japonica (Rice)).